The primary structure comprises 871 residues: MGDSDDEYDRRRRDKFRRERSDYDRSRERDERRRGDDWNDREWDHGRERRSRGEYRDYDRNRRERFSPPRHELSPPQKRMRRDWDGHSSDPYHSGYEMPYAGGGGGPTYGPPQPWGHPGVHIMQHHVLPIQARLGSIAEIDLGVPPPVMKTFKEFLLSLDDSVDETEAVKRYNDYKLDFRRQQMQDFFLAHKDEEWFRSKYHPDEVGKRRQEARGALQNRLRVFLSLMETGWFDNLLLDIDKADAIVKMLDAAVIKMEGGTENDLRILEQEEEEEQAGKPGEPGKKEEGRAGAGLGDGERKTNDKDEKKEDSKQAENDSSNDDKTKKSEGDGDKEEKKEDSEKEAKKSSKKRNRKHSGDDSFDEGSMSESESESESGQAEEEKEEAEALKEKEKPKEEEWEKPKDAAGLECKPRPLHKTCSLFMRNIAPNISRAEIISLCKRYPGFMRVALSEPQPERRFFRRGWVTFDRSVNIKEICWNLQNIRLRECELSPGVNRDLTRRVRNINGITQHKQIVRNDIKLAAKLIHTLDDRTQLWASEPGTPPLPTSLPSQNPILKNITDYLIEEVSAEEEELLGSSGGAPPEEPPKEGNPAEINVERDEKLIKVLDKLLLYLRIVHSLDYYNTCEYPNEDEMPNRCGIIHVRGPMPPNRISHGEVLEWQKTFEEKLTPLLSVRESLSEEEAQKMGRKDPEQEVEKFVTSNTQELGKDKWLCPLSGKKFKGPEFVRKHIFNKHAEKIEEVKKEVAFFNNFLTDAKRPALPEIKPAQPPGPAQSLTPGLPYPHQTPQGLMPYGQPRPPILGYGAGAVRPAVPTGGPPYPHAPYGAGRGNYDAFRGQGGYPGKPRNRMVRGDPRAIVEYRDLDAPDDVDFF.

Residues 1–90 (MGDSDDEYDR…RRDWDGHSSD (90 aa)) are disordered. The residue at position 2 (Gly2) is an N-acetylglycine. Position 4 is a phosphoserine (Ser4). At Tyr8 the chain carries Phosphotyrosine. The span at 8-73 (YDRRRRDKFR…ERFSPPRHEL (66 aa)) shows a compositional bias: basic and acidic residues. A phosphoserine mark is found at Ser67, Ser74, and Ser136. Lys150 participates in a covalent cross-link: Glycyl lysine isopeptide (Lys-Gly) (interchain with G-Cter in SUMO2). The segment at 272-411 (EEEEQAGKPG…KPKDAAGLEC (140 aa)) is disordered. Over residues 297 to 347 (DGERKTNDKDEKKEDSKQAENDSSNDDKTKKSEGDGDKEEKKEDSEKEAKK) the composition is skewed to basic and acidic residues. Positions 370-385 (SESESESGQAEEEKEE) are enriched in acidic residues. Positions 386–411 (AEALKEKEKPKEEEWEKPKDAAGLEC) are enriched in basic and acidic residues. Phosphoserine is present on residues Ser492 and Ser539. Residue Thr543 is modified to Phosphothreonine. At Ser569 the chain carries Phosphoserine. Positions 574-597 (ELLGSSGGAPPEEPPKEGNPAEIN) are disordered. Thr670 is subject to Phosphothreonine. Ser678 carries the phosphoserine modification. Omega-N-methylarginine is present on residues Arg828, Arg835, and Arg845. Residues 830 to 849 (NYDAFRGQGGYPGKPRNRMV) form a disordered region.

The protein belongs to the ARS2 family. In terms of assembly, interacts with CASP8AP2, ERBB4, NCBP1/CBP80 and DROSHA. Interacts with LUZP4. Interacts with NCBP2/CBP20 and NCBP3. Interacts with MTREX.

The protein resides in the nucleus. It localises to the nucleoplasm. It is found in the cytoplasm. Acts as a mediator between the cap-binding complex (CBC) and the primary microRNAs (miRNAs) processing machinery during cell proliferation. Contributes to the stability and delivery of capped primary miRNA transcripts to the primary miRNA processing complex containing DGCR8 and DROSHA, thereby playing a role in RNA-mediated gene silencing (RNAi) by miRNAs. Binds capped RNAs (m7GpppG-capped RNA); however interaction is probably mediated via its interaction with NCBP1/CBP80 component of the CBC complex. Involved in cell cycle progression at S phase. Does not directly confer arsenite resistance but rather modulates arsenic sensitivity. Independently of its activity on miRNAs, necessary and sufficient to promote neural stem cell self-renewal. Does so by directly binding SOX2 promoter and positively regulating its transcription. The polypeptide is Serrate RNA effector molecule homolog (SRRT) (Pongo abelii (Sumatran orangutan)).